The chain runs to 57 residues: Toxin GhoT (57 aa).

The next 2 membrane-spanning stretches (helical) occupy residues 7–27 (ILIF…FISH) and 37–57 (AFLV…FSLF).

This sequence belongs to the GhoT/OrtT toxin family.

It localises to the cell inner membrane. In terms of biological role, toxic component of a type V toxin-antitoxin (TA) system. Causes membrane damage when induced by MqsR, slowing cell growth and leading to the formation of dormant persister cells; involved with GhoS, its antitoxin, in reducing cell growth during antibacterial stress. Its toxic effects are neutralized by GhoS, which digests ghoT transcripts in a sequence-specific manner. In Escherichia coli O157:H7, this protein is Toxin GhoT.